Consider the following 75-residue polypeptide: Large ribosomal subunit protein bL31 (75 aa).

It belongs to the bacterial ribosomal protein bL31 family. Type A subfamily. In terms of assembly, part of the 50S ribosomal subunit.

In terms of biological role, binds the 23S rRNA. The protein is Large ribosomal subunit protein bL31 of Rhodopseudomonas palustris (strain BisB18).